The following is a 395-amino-acid chain: Glutamyl-tRNA reductase (395 aa).

Substrate is bound by residues 45 to 48 (TCNR), Ser-87, 92 to 94 (EDQ), and Gln-98. Cys-46 functions as the Nucleophile in the catalytic mechanism. 167–172 (GAGEMG) lines the NADP(+) pocket.

This sequence belongs to the glutamyl-tRNA reductase family. Homodimer.

It carries out the reaction (S)-4-amino-5-oxopentanoate + tRNA(Glu) + NADP(+) = L-glutamyl-tRNA(Glu) + NADPH + H(+). It participates in porphyrin-containing compound metabolism; protoporphyrin-IX biosynthesis; 5-aminolevulinate from L-glutamyl-tRNA(Glu): step 1/2. Catalyzes the NADPH-dependent reduction of glutamyl-tRNA(Glu) to glutamate 1-semialdehyde (GSA). This Methanosphaera stadtmanae (strain ATCC 43021 / DSM 3091 / JCM 11832 / MCB-3) protein is Glutamyl-tRNA reductase.